Reading from the N-terminus, the 357-residue chain is Molybdenum import ATP-binding protein ModC (357 aa).

Residues 1-233 form the ABC transporter domain; sequence MRLEVEARLR…PFPTSGPGRR (233 aa). 31-38 serves as a coordination point for ATP; that stretch reads GRSGSGKT. The Mop domain maps to 293 to 357; it reads GISALNVLPG…AVVKTVALDY (65 aa).

This sequence belongs to the ABC transporter superfamily. Molybdate importer (TC 3.A.1.8) family. As to quaternary structure, the complex is composed of two ATP-binding proteins (ModC), two transmembrane proteins (ModB) and a solute-binding protein (ModA).

The protein resides in the cell inner membrane. It catalyses the reaction molybdate(out) + ATP + H2O = molybdate(in) + ADP + phosphate + H(+). In terms of biological role, part of the ABC transporter complex ModABC involved in molybdenum import. Responsible for energy coupling to the transport system. This is Molybdenum import ATP-binding protein ModC from Rhizobium meliloti (strain 1021) (Ensifer meliloti).